The following is a 267-amino-acid chain: MSIQLGIIGGGVMAEAILARLIAEKTYAPEEIIVGEPHGARRDYLQKTYQVRVSPDNQEAANVSEVLLLAVKPQVLDRVLASLAGGANRPLVISILAGVSLQRIQKGFPDHAIIRAMPNTPATVGAGMTAIAANKMVEPDQLAKAKAIFSAVGNVVEVPENLMDAVTGVSGSGPAYVALMIEALADGGVLAGLPRAIAQKLALQTVLGTAELIKETEEHPAQIKDKVTSPGGTTIAGVAVLEKMGFRSAIIEAVRAAYRRSQELGKK.

Belongs to the pyrroline-5-carboxylate reductase family.

It localises to the cytoplasm. The enzyme catalyses L-proline + NADP(+) = (S)-1-pyrroline-5-carboxylate + NADPH + 2 H(+). The catalysed reaction is L-proline + NAD(+) = (S)-1-pyrroline-5-carboxylate + NADH + 2 H(+). It functions in the pathway amino-acid biosynthesis; L-proline biosynthesis; L-proline from L-glutamate 5-semialdehyde: step 1/1. Functionally, catalyzes the reduction of 1-pyrroline-5-carboxylate (PCA) to L-proline. This chain is Pyrroline-5-carboxylate reductase, found in Synechocystis sp. (strain ATCC 27184 / PCC 6803 / Kazusa).